A 176-amino-acid chain; its full sequence is Ribosome rescue factor SmrB (176 aa).

The Smr domain occupies 93-168 (LDLHGYRQSE…GDAALLVLID (76 aa)).

This sequence belongs to the SmrB family. As to quaternary structure, associates with collided ribosomes, but not with correctly translating polysomes.

In terms of biological role, acts as a ribosome collision sensor. Detects stalled/collided disomes (pairs of ribosomes where the leading ribosome is stalled and a second ribosome has collided with it) and endonucleolytically cleaves mRNA at the 5' boundary of the stalled ribosome. Stalled/collided disomes form a new interface (primarily via the 30S subunits) that binds SmrB. Cleaved mRNA becomes available for tmRNA ligation, leading to ribosomal subunit dissociation and rescue of stalled ribosomes. In Shewanella sp. (strain ANA-3), this protein is Ribosome rescue factor SmrB.